A 260-amino-acid polypeptide reads, in one-letter code: Resolvase (260 aa).

The Tyr recombinase domain maps to 38–241 (ELPKYLLAPE…FALDVAARHR (204 aa)). Catalysis depends on residues Arg-73, Lys-105, His-193, Arg-196, and His-219. Catalysis depends on Tyr-228, which acts as the O-(3'-phospho-DNA)-tyrosine intermediate.

Belongs to the 'phage' integrase family.

Its function is as follows. This resolvase acts at the RfsF equivalent resolution sequence of pColBM-CL139. The sequence is that of Resolvase (resD) from Escherichia coli.